Consider the following 81-residue polypeptide: Photosystem I iron-sulfur center (81 aa).

2 4Fe-4S ferredoxin-type domains span residues 1 to 31 (MSHKVKIYDTCIGCTQCVRACPLDVLEMVPW) and 39 to 68 (IASSPRTEDCVGCKRCETACPTDFLSIRVY). Cysteine 11, cysteine 14, cysteine 17, cysteine 21, cysteine 48, cysteine 51, cysteine 54, and cysteine 58 together coordinate [4Fe-4S] cluster.

In terms of assembly, the cyanobacterial PSI reaction center is composed of one copy each of PsaA,B,C,D,E,F,I,J,K,L,M and X, and forms trimeric complexes. It depends on [4Fe-4S] cluster as a cofactor.

The protein resides in the cellular thylakoid membrane. It catalyses the reaction reduced [plastocyanin] + hnu + oxidized [2Fe-2S]-[ferredoxin] = oxidized [plastocyanin] + reduced [2Fe-2S]-[ferredoxin]. Functionally, apoprotein for the two 4Fe-4S centers FA and FB of photosystem I (PSI); essential for photochemical activity. FB is the terminal electron acceptor of PSI, donating electrons to ferredoxin. The C-terminus interacts with PsaA/B/D and helps assemble the protein into the PSI complex. Required for binding of PsaD and PsaE to PSI. PSI is a plastocyanin/cytochrome c6-ferredoxin oxidoreductase, converting photonic excitation into a charge separation, which transfers an electron from the donor P700 chlorophyll pair to the spectroscopically characterized acceptors A0, A1, FX, FA and FB in turn. The polypeptide is Photosystem I iron-sulfur center (Crocosphaera subtropica (strain ATCC 51142 / BH68) (Cyanothece sp. (strain ATCC 51142))).